A 234-amino-acid polypeptide reads, in one-letter code: MPQGLAWLRYLGILLGMALGNEGLEPWPLTRSDECAITGFLRDKLQYRNRLQYMKHYFPINYRVSVPYEGVLRTANVTRLQRAQVSQQELRYLWVLVSLSATEWVQEVLLEGHPSWKYLEEVHTLLLDVKQGLGGVEVSPQVEAVLNLLSAPGSLKLVRPKALLDNCFRVMQLLYCPCCKESSVLNWQDCEAPQPQPRSPASAQCEAAQLYPLPQPPSTSLPRVLGPSAGPPTQ.

The signal sequence occupies residues M1 to G20. The N-linked (GlcNAc...) asparagine glycan is linked to N76. The tract at residues E191–Q234 is disordered.

It belongs to the IL-34 family. As to quaternary structure, homodimer. Interacts with CSF1R.

It localises to the secreted. Cytokine that promotes the proliferation, survival and differentiation of monocytes and macrophages. Promotes the release of pro-inflammatory chemokines, and thereby plays an important role in innate immunity and in inflammatory processes. Plays an important role in the regulation of osteoclast proliferation and differentiation, and in the regulation of bone resorption. Signaling via CSF1R and its downstream effectors stimulates phosphorylation of MAPK1/ERK2 AND MAPK3/ERK1. This chain is Interleukin-34, found in Bos taurus (Bovine).